Here is a 278-residue protein sequence, read N- to C-terminus: Hydroxyethylthiazole kinase (278 aa).

Position 48 (M48) interacts with substrate. Positions 124 and 175 each coordinate ATP. G202 contacts substrate.

This sequence belongs to the Thz kinase family. Mg(2+) serves as cofactor.

The catalysed reaction is 5-(2-hydroxyethyl)-4-methylthiazole + ATP = 4-methyl-5-(2-phosphooxyethyl)-thiazole + ADP + H(+). Its pathway is cofactor biosynthesis; thiamine diphosphate biosynthesis; 4-methyl-5-(2-phosphoethyl)-thiazole from 5-(2-hydroxyethyl)-4-methylthiazole: step 1/1. Its function is as follows. Catalyzes the phosphorylation of the hydroxyl group of 4-methyl-5-beta-hydroxyethylthiazole (THZ). This is Hydroxyethylthiazole kinase from Clostridium botulinum (strain Alaska E43 / Type E3).